The sequence spans 1184 residues: DNA polymerase III subunit alpha (1184 aa).

The protein belongs to the DNA polymerase type-C family. DnaE subfamily. The Pol III holoenzyme complex contains at least 10 different subunits organized into 3 functionally essential subassemblies: the Pol III core, the beta sliding clamp processivity factor and the clamp-loading complex. The Pol III core (subunits alpha, epsilon and theta) contains the polymerase and the 3'-5' exonuclease proofreading activities. The polymerase is tethered to the template via the dimeric beta sliding clamp processivity factor. The clamp loader (also called gamma complex) assembles the beta sliding clamp onto the primed template and plays a central role in the organization and communication at the replication fork. The clamp-loading complex contains delta, delta', psi and chi, and 3 copies of either or both of two different DnaX proteins, gamma and tau. The DNA replisome complex has a single clamp loader (3 tau and 1 each of delta, delta', psi and chi subunits) which binds 3 Pol III cores (1 core on the leading strand and 2 on the lagging strand) each with a beta sliding clamp dimer. Interacts with the beta-sliding clamp (DnaN). Co-immunoprecipitates with DarG in the presence and absence of darT.

Its subcellular location is the cytoplasm. The catalysed reaction is DNA(n) + a 2'-deoxyribonucleoside 5'-triphosphate = DNA(n+1) + diphosphate. In terms of biological role, DNA polymerase III is a complex, multichain enzyme responsible for most of the replicative synthesis in bacteria. Pol III also exhibits 3' to 5' exonuclease activity. The alpha chain is the DNA polymerase. The protein is DNA polymerase III subunit alpha (dnaE1) of Mycobacterium tuberculosis (strain ATCC 25618 / H37Rv).